We begin with the raw amino-acid sequence, 141 residues long: Nucleoside diphosphate kinase (141 aa).

Positions 11, 59, 87, 93, 104, and 114 each coordinate ATP. The active-site Pros-phosphohistidine intermediate is the H117.

It belongs to the NDK family. In terms of assembly, homotetramer. Requires Mg(2+) as cofactor.

Its subcellular location is the cytoplasm. It catalyses the reaction a 2'-deoxyribonucleoside 5'-diphosphate + ATP = a 2'-deoxyribonucleoside 5'-triphosphate + ADP. The enzyme catalyses a ribonucleoside 5'-diphosphate + ATP = a ribonucleoside 5'-triphosphate + ADP. Major role in the synthesis of nucleoside triphosphates other than ATP. The ATP gamma phosphate is transferred to the NDP beta phosphate via a ping-pong mechanism, using a phosphorylated active-site intermediate. This is Nucleoside diphosphate kinase from Xylella fastidiosa (strain 9a5c).